The chain runs to 187 residues: PRA1 family protein G1 (187 aa).

Helical transmembrane passes span 84-104, 125-145, and 146-166; these read LFLI…AMWL, VIVF…NSLQ, and CLIL…IIRN.

It belongs to the PRA1 family. As to expression, expressed in roots and lateral roots.

The protein resides in the endosome membrane. May be involved in both secretory and endocytic intracellular trafficking in the endosomal/prevacuolar compartments. This is PRA1 family protein G1 (PRA1G1) from Arabidopsis thaliana (Mouse-ear cress).